The chain runs to 1183 residues: DNA-directed RNA polymerase subunit beta (1183 aa).

The protein belongs to the RNA polymerase beta chain family. In terms of assembly, the RNAP catalytic core consists of 2 alpha, 1 beta, 1 beta' and 1 omega subunit. When a sigma factor is associated with the core the holoenzyme is formed, which can initiate transcription.

The enzyme catalyses RNA(n) + a ribonucleoside 5'-triphosphate = RNA(n+1) + diphosphate. In terms of biological role, DNA-dependent RNA polymerase catalyzes the transcription of DNA into RNA using the four ribonucleoside triphosphates as substrates. The sequence is that of DNA-directed RNA polymerase subunit beta from Staphylococcus aureus (strain MRSA252).